The following is a 179-amino-acid chain: MEKEGVTMVINFEELHPNERAELERNIFFSTLEQLKGWARSNSLWPMTFGLACCAIEMMGVGSSHYDLDRFGSFFRTSPRQSDVMIVSGTVTKKMAPIVRRLYDQMPEPKWVIAMGSCATAGGPYVNSYAVVKGVDQIVPVDVYIPGCPPNPAALIYGINKLKEKIRYEAKTGKQVTNK.

4 residues coordinate [4Fe-4S] cluster: C53, C54, C118, and C148.

This sequence belongs to the complex I 20 kDa subunit family. NDH-1 is composed of 14 different subunits. Subunits NuoB, C, D, E, F, and G constitute the peripheral sector of the complex. Requires [4Fe-4S] cluster as cofactor.

It localises to the cell membrane. The catalysed reaction is a quinone + NADH + 5 H(+)(in) = a quinol + NAD(+) + 4 H(+)(out). In terms of biological role, NDH-1 shuttles electrons from NADH, via FMN and iron-sulfur (Fe-S) centers, to quinones in the respiratory chain. The immediate electron acceptor for the enzyme in this species is believed to be a menaquinone. Couples the redox reaction to proton translocation (for every two electrons transferred, four hydrogen ions are translocated across the cytoplasmic membrane), and thus conserves the redox energy in a proton gradient. This is NADH-quinone oxidoreductase subunit B from Bacillus thuringiensis (strain Al Hakam).